The primary structure comprises 367 residues: Peptide chain release factor 2 (367 aa).

Q249 is subject to N5-methylglutamine.

The protein belongs to the prokaryotic/mitochondrial release factor family. In terms of processing, methylated by PrmC. Methylation increases the termination efficiency of RF2.

Its subcellular location is the cytoplasm. Functionally, peptide chain release factor 2 directs the termination of translation in response to the peptide chain termination codons UGA and UAA. The protein is Peptide chain release factor 2 of Pseudothermotoga lettingae (strain ATCC BAA-301 / DSM 14385 / NBRC 107922 / TMO) (Thermotoga lettingae).